The sequence spans 375 residues: Growth/differentiation factor 8 (375 aa).

The N-terminal stretch at 1 to 18 (MQRLQICVYIYLFVLIVA) is a signal peptide. Positions 19–266 (GPVDLSENSE…VTDTPKRSRR (248 aa)) are excised as a propeptide. The N-linked (GlcNAc...) asparagine glycan is linked to N71. Intrachain disulfides connect C272–C282, C281–C340, C309–C372, and C313–C374.

This sequence belongs to the TGF-beta family. As to quaternary structure, homodimer; disulfide-linked. Interacts with WFIKKN2, leading to inhibit its activity. Interacts with FSTL3. Synthesized as large precursor molecule that undergoes proteolytic cleavage to generate an N-terminal propeptide and a disulfide linked C-terminal dimer, which is the biologically active molecule. The circulating form consists of a latent complex of the C-terminal dimer and other proteins, including its propeptide, which maintain the C-terminal dimer in a latent, inactive state. Ligand activation requires additional cleavage of the prodomain by a tolloid-like metalloproteinase.

The protein localises to the secreted. In terms of biological role, acts specifically as a negative regulator of skeletal muscle growth. The sequence is that of Growth/differentiation factor 8 (MSTN) from Canis lupus familiaris (Dog).